The chain runs to 435 residues: Cytochrome c biogenesis protein CcsB (435 aa).

3 helical membrane passes run 14-34, 72-92, and 162-182; these read LRLAILLLLLIAGASALGTIL, SVWFLSLLAWLGLALILCSWR, and VGPLLVHTGLVLLLIGAAWGA.

Belongs to the Ccs1/CcsB family. As to quaternary structure, may interact with CcsA.

Its subcellular location is the cellular thylakoid membrane. In terms of biological role, required during biogenesis of c-type cytochromes (cytochrome c6 and cytochrome f) at the step of heme attachment. The polypeptide is Cytochrome c biogenesis protein CcsB (Synechococcus sp. (strain CC9311)).